The primary structure comprises 411 residues: Lycopene beta cyclase (411 aa).

An NAD(+)-binding site is contributed by 4–32; that stretch reads ALVIGSGPAGLAIAAELAQRGLKVQGLSP.

Belongs to the lycopene cyclase family. It depends on FAD as a cofactor.

The enzyme catalyses a carotenoid psi-end group = a carotenoid beta-end derivative. It carries out the reaction all-trans-lycopene = gamma-carotene. The catalysed reaction is gamma-carotene = all-trans-beta-carotene. It catalyses the reaction all-trans-neurosporene = beta-zeacarotene. Its pathway is carotenoid biosynthesis; beta-carotene biosynthesis. It functions in the pathway carotenoid biosynthesis; beta-zeacarotene biosynthesis. Its activity is regulated as follows. Inhibited by the bleaching herbicide 2-(4-methylphenoxy)triethylamine hydrochloride (MPTA). Catalyzes the double cyclization reaction which converts lycopene to beta-carotene. It also converts neurosporene to the monocyclic beta-zeacarotene but does not cyclize zeta-carotene. This is Lycopene beta cyclase from Synechococcus elongatus (strain ATCC 33912 / PCC 7942 / FACHB-805) (Anacystis nidulans R2).